The primary structure comprises 183 residues: dCTP deaminase, dUMP-forming (183 aa).

DCTP is bound by residues 99–104 (KSSIAR), Asp-117, 125–127 (TLE), Gln-146, Tyr-159, Lys-166, and Gln-170. Catalysis depends on Glu-127, which acts as the Proton donor/acceptor.

It belongs to the dCTP deaminase family. In terms of assembly, homotrimer.

It catalyses the reaction dCTP + 2 H2O = dUMP + NH4(+) + diphosphate. Its pathway is pyrimidine metabolism; dUMP biosynthesis; dUMP from dCTP: step 1/1. Its function is as follows. Bifunctional enzyme that catalyzes both the deamination of dCTP to dUTP and the hydrolysis of dUTP to dUMP without releasing the toxic dUTP intermediate. The protein is dCTP deaminase, dUMP-forming of Methanoregula boonei (strain DSM 21154 / JCM 14090 / 6A8).